Consider the following 232-residue polypeptide: 7-cyano-7-deazaguanine synthase (232 aa).

Position 7-17 (7-17 (CSGGLDSVSLA)) interacts with ATP. Residues Cys-185, Cys-193, Cys-196, and Cys-199 each coordinate Zn(2+).

The protein belongs to the QueC family. The cofactor is Zn(2+).

The enzyme catalyses 7-carboxy-7-deazaguanine + NH4(+) + ATP = 7-cyano-7-deazaguanine + ADP + phosphate + H2O + H(+). It functions in the pathway purine metabolism; 7-cyano-7-deazaguanine biosynthesis. Functionally, catalyzes the ATP-dependent conversion of 7-carboxy-7-deazaguanine (CDG) to 7-cyano-7-deazaguanine (preQ(0)). The sequence is that of 7-cyano-7-deazaguanine synthase from Brucella canis (strain ATCC 23365 / NCTC 10854 / RM-666).